The following is a 122-amino-acid chain: Large ribosomal subunit protein bL19c (122 aa).

Belongs to the bacterial ribosomal protein bL19 family.

Its subcellular location is the plastid. It is found in the chloroplast. The polypeptide is Large ribosomal subunit protein bL19c (rpl19) (Rhodomonas salina (Cryptomonas salina)).